Here is a 318-residue protein sequence, read N- to C-terminus: Formimidoylglutamase (318 aa).

Mn(2+) is bound by residues histidine 130, aspartate 155, histidine 157, aspartate 159, aspartate 246, and aspartate 248.

This sequence belongs to the arginase family. Mn(2+) is required as a cofactor.

It catalyses the reaction N-formimidoyl-L-glutamate + H2O = formamide + L-glutamate. The protein operates within amino-acid degradation; L-histidine degradation into L-glutamate; L-glutamate from N-formimidoyl-L-glutamate (hydrolase route): step 1/1. Functionally, catalyzes the conversion of N-formimidoyl-L-glutamate to L-glutamate and formamide. The polypeptide is Formimidoylglutamase (Photorhabdus laumondii subsp. laumondii (strain DSM 15139 / CIP 105565 / TT01) (Photorhabdus luminescens subsp. laumondii)).